A 306-amino-acid chain; its full sequence is Glutathione transport system permease protein GsiC (306 aa).

Over methionine 1–arginine 8 the chain is Cytoplasmic. A helical transmembrane segment spans residues leucine 9–methionine 29. The Periplasmic portion of the chain corresponds to leucine 30–threonine 102. The 198-residue stretch at phenylalanine 95–valine 292 folds into the ABC transmembrane type-1 domain. A helical membrane pass occupies residues isoleucine 103–tryptophan 123. At arginine 124–threonine 134 the chain is on the cytoplasmic side. The chain crosses the membrane as a helical span at residues isoleucine 135 to phenylalanine 155. The Periplasmic segment spans residues serine 156–aspartate 168. A helical transmembrane segment spans residues serine 169–alanine 189. Residues arginine 190–methionine 228 are Cytoplasmic-facing. A helical membrane pass occupies residues isoleucine 229–valine 249. Residues glutamate 250–glutamate 277 are Periplasmic-facing. The helical transmembrane segment at isoleucine 278–alanine 298 threads the bilayer. The Cytoplasmic segment spans residues isoleucine 299 to lysine 306.

The protein belongs to the binding-protein-dependent transport system permease family. As to quaternary structure, the complex is composed of two ATP-binding proteins (GsiA), two transmembrane proteins (GsiC and GsiD) and a solute-binding protein (GsiB).

The protein resides in the cell inner membrane. In terms of biological role, part of the ABC transporter complex GsiABCD involved in glutathione import. Probably responsible for the translocation of the substrate across the membrane. The protein is Glutathione transport system permease protein GsiC of Shigella boydii serotype 4 (strain Sb227).